Here is a 300-residue protein sequence, read N- to C-terminus: CDP-diacylglycerol--serine O-phosphatidyltransferase (300 aa).

6 helical membrane-spanning segments follow: residues 10-30 (AVNL…AGLT), 74-94 (IDSL…LYAT), 95-115 (MLST…CVVL), 135-155 (EFFV…LLAL), 162-182 (GWWT…MLLI), and 207-227 (LAIF…VIIL).

The protein belongs to the CDP-alcohol phosphatidyltransferase class-I family.

The protein resides in the cell membrane. It catalyses the reaction a CDP-1,2-diacyl-sn-glycerol + L-serine = a 1,2-diacyl-sn-glycero-3-phospho-L-serine + CMP + H(+). The protein is CDP-diacylglycerol--serine O-phosphatidyltransferase (pssA) of Mycobacterium leprae (strain TN).